The primary structure comprises 37 residues: Cytochrome b6-f complex subunit 5 (37 aa).

Residues 5-25 (LLSGIVLGLMPVTLAGLFTTA) traverse the membrane as a helical segment.

Belongs to the PetG family. As to quaternary structure, the 4 large subunits of the cytochrome b6-f complex are cytochrome b6, subunit IV (17 kDa polypeptide, PetD), cytochrome f and the Rieske protein, while the 4 small subunits are PetG, PetL, PetM and PetN. The complex functions as a dimer.

Its subcellular location is the plastid. The protein resides in the chloroplast thylakoid membrane. In terms of biological role, component of the cytochrome b6-f complex, which mediates electron transfer between photosystem II (PSII) and photosystem I (PSI), cyclic electron flow around PSI, and state transitions. PetG is required for either the stability or assembly of the cytochrome b6-f complex. In Ostreococcus tauri, this protein is Cytochrome b6-f complex subunit 5.